We begin with the raw amino-acid sequence, 719 residues long: Potassium-transporting ATPase ATP-binding subunit (719 aa).

Transmembrane regions (helical) follow at residues Leu35 to Phe55, Val62 to Glu82, Ile228 to Gly248, and Phe254 to Met274. Residue Asp318 is the 4-aspartylphosphate intermediate of the active site. Asp355 and Glu359 together coordinate ATP. The disordered stretch occupies residues Gly372–Pro396. The span at Lys373–Ser383 shows a compositional bias: polar residues. ATP-binding positions include Phe416–Ser423 and Lys435. Asp554 and Asp558 together coordinate Mg(2+). 3 helical membrane passes run Phe624–Leu644, Ala652–Leu672, and Leu698–Phe718.

The protein belongs to the cation transport ATPase (P-type) (TC 3.A.3) family. Type IA subfamily. As to quaternary structure, the system is composed of three essential subunits: KdpA, KdpB and KdpC. The complex also contains KdpF, a small non-essential subunit.

It is found in the cell membrane. The catalysed reaction is K(+)(out) + ATP + H2O = K(+)(in) + ADP + phosphate + H(+). In terms of biological role, part of the high-affinity ATP-driven potassium transport (or Kdp) system, which catalyzes the hydrolysis of ATP coupled with the electrogenic transport of potassium into the cytoplasm. This subunit is responsible for energy coupling to the transport system and for the release of the potassium ions to the cytoplasm. The Kdp system is essential for growth under K(+) limitation, and for survival under desiccation and salt crystal inclusion. This is Potassium-transporting ATPase ATP-binding subunit from Halobacterium salinarum (strain ATCC 29341 / DSM 671 / R1).